Consider the following 480-residue polypeptide: Protein nucleotidyltransferase YdiU (480 aa).

The ATP site is built by Gly-86, Gly-88, Arg-89, Lys-109, Asp-121, Gly-122, Arg-172, and Arg-179. Asp-248 serves as the catalytic Proton acceptor. The Mg(2+) site is built by Asn-249 and Asp-258. Asp-258 provides a ligand contact to ATP.

Belongs to the SELO family. The cofactor is Mg(2+). Requires Mn(2+) as cofactor.

It catalyses the reaction L-seryl-[protein] + ATP = 3-O-(5'-adenylyl)-L-seryl-[protein] + diphosphate. The enzyme catalyses L-threonyl-[protein] + ATP = 3-O-(5'-adenylyl)-L-threonyl-[protein] + diphosphate. It carries out the reaction L-tyrosyl-[protein] + ATP = O-(5'-adenylyl)-L-tyrosyl-[protein] + diphosphate. The catalysed reaction is L-histidyl-[protein] + UTP = N(tele)-(5'-uridylyl)-L-histidyl-[protein] + diphosphate. It catalyses the reaction L-seryl-[protein] + UTP = O-(5'-uridylyl)-L-seryl-[protein] + diphosphate. The enzyme catalyses L-tyrosyl-[protein] + UTP = O-(5'-uridylyl)-L-tyrosyl-[protein] + diphosphate. In terms of biological role, nucleotidyltransferase involved in the post-translational modification of proteins. It can catalyze the addition of adenosine monophosphate (AMP) or uridine monophosphate (UMP) to a protein, resulting in modifications known as AMPylation and UMPylation. This is Protein nucleotidyltransferase YdiU from Salmonella typhi.